An 816-amino-acid chain; its full sequence is H(+)/Cl(-) exchange transporter 5 (816 aa).

The tract at residues 1–28 (MAMWQGAMDNRGFQQGSFNSFQSSSSDE) is disordered. The Cytoplasmic portion of the chain corresponds to 1 to 124 (MAMWQGAMDN…WALIHSVSDA (124 aa)). The span at 12–25 (GFQQGSFNSFQSSS) shows a compositional bias: low complexity. The next 2 membrane-spanning stretches (helical) occupy residues 125-162 (FSGW…ICTE) and 208-231 (VNYF…VKVF). The short motif at 237 to 241 (GSGIP) is the Selectivity filter part_1 element. Ser238 provides a ligand contact to chloride. The segment at residues 240–247 (IPEIKTIL) is an intramembrane region (helical). The next 2 helical transmembrane spans lie at 256–275 (LGKW…VSSG) and 281–300 (EGPL…HCFN). Residues 279 to 283 (GKEGP) carry the Selectivity filter part_2 motif. 2 consecutive intramembrane regions (helical) follow at residues 312–324 (VLSA…VSVA) and 328–336 (PIGGVLFSL). Transmembrane regions (helical) follow at residues 348–366 (LWRS…RSIN), 389–414 (LVPF…IAWC), 422–442 (LGKY…ILAF), 498–518 (MWQL…TFGM), and 523–542 (GLFI…LGVG). A Selectivity filter part_3 motif is present at residues 523-527 (GLFIP). Phe525 is a binding site for chloride. The segment at residues 570–584 (GLYAMVGAAACLGGV) is an intramembrane region (helical). Residues 585–587 (TRM) constitute an intramembrane region (note=Loop between two helices). Positions 588–599 (TVSLVVIMFELT) form an intramembrane region, helical. The note=Loop between two helices intramembrane region spans 600–604 (GGLEY). The chain crosses the membrane as a helical span at residues 605 to 622 (IVPLMAAAMTSKWVADAL). Residues 623–816 (GREGIYDAHI…NQDPDSILFN (194 aa)) are Cytoplasmic-facing. Chloride is bound at residue Tyr628. CBS domains lie at 656–720 (MKPR…ARKK) and 752–812 (ILDL…DPDS). ATP is bound by residues Thr666, 687–689 (YSG), and 794–797 (TKKD).

Belongs to the chloride channel (TC 2.A.49) family. ClC-5/CLCN5 subfamily. As to quaternary structure, interacts with NEDD4 and NEDD4L. Ubiquitinated by NEDD4L in the presence of albumin; which promotes endocytosis and proteasomal degradation.

The protein resides in the golgi apparatus membrane. It is found in the endosome membrane. It localises to the cell membrane. The enzyme catalyses 2 chloride(in) + H(+)(out) = 2 chloride(out) + H(+)(in). Its function is as follows. Proton-coupled chloride transporter. Functions as antiport system and exchanges chloride ions against protons. Important for normal acidification of the endosome lumen. May play an important role in renal tubular function. The CLC channel family contains both chloride channels and proton-coupled anion transporters that exchange chloride or another anion for protons. The absence of conserved gating glutamate residues is typical for family members that function as channels. The protein is H(+)/Cl(-) exchange transporter 5 (CLCN5) of Sus scrofa (Pig).